Reading from the N-terminus, the 536-residue chain is L-aspartate oxidase 2 (536 aa).

FAD-binding positions include 22–25 (EGLA) and 51–58 (SSYWAQGG). Arg284 functions as the Proton donor/acceptor in the catalytic mechanism. Residues Glu369 and 385–386 (SL) each bind FAD.

Belongs to the FAD-dependent oxidoreductase 2 family. NadB subfamily. The cofactor is FAD.

Its subcellular location is the cytoplasm. It catalyses the reaction L-aspartate + O2 = iminosuccinate + H2O2. The protein operates within cofactor biosynthesis; NAD(+) biosynthesis; iminoaspartate from L-aspartate (oxidase route): step 1/1. In terms of biological role, catalyzes the oxidation of L-aspartate to iminoaspartate, the first step in the de novo biosynthesis of NAD(+). The protein is L-aspartate oxidase 2 (nadB2) of Ralstonia nicotianae (strain ATCC BAA-1114 / GMI1000) (Ralstonia solanacearum).